Consider the following 700-residue polypeptide: Elongation factor G (700 aa).

The tr-type G domain maps to 10 to 285 (DRTRNIGIMA…AVIDYLPSPL (276 aa)). Residues 19–26 (AHIDAGKT), 83–87 (DTPGH), and 137–140 (NKMD) contribute to the GTP site.

The protein belongs to the TRAFAC class translation factor GTPase superfamily. Classic translation factor GTPase family. EF-G/EF-2 subfamily.

It is found in the cytoplasm. In terms of biological role, catalyzes the GTP-dependent ribosomal translocation step during translation elongation. During this step, the ribosome changes from the pre-translocational (PRE) to the post-translocational (POST) state as the newly formed A-site-bound peptidyl-tRNA and P-site-bound deacylated tRNA move to the P and E sites, respectively. Catalyzes the coordinated movement of the two tRNA molecules, the mRNA and conformational changes in the ribosome. In Lacticaseibacillus casei (strain BL23) (Lactobacillus casei), this protein is Elongation factor G.